The primary structure comprises 205 residues: Glycerol-3-phosphate acyltransferase (205 aa).

Transmembrane regions (helical) follow at residues 7–27, 54–74, 80–100, 116–136, 141–161, and 163–183; these read MTAL…VWVC, VVPA…VLWV, LPIW…SYPL, VLLM…ALLA, TAAV…YWLA, and EATL…AWNI.

The protein belongs to the PlsY family. As to quaternary structure, probably interacts with PlsX.

It localises to the cell inner membrane. The enzyme catalyses an acyl phosphate + sn-glycerol 3-phosphate = a 1-acyl-sn-glycero-3-phosphate + phosphate. Its pathway is lipid metabolism; phospholipid metabolism. Functionally, catalyzes the transfer of an acyl group from acyl-phosphate (acyl-PO(4)) to glycerol-3-phosphate (G3P) to form lysophosphatidic acid (LPA). This enzyme utilizes acyl-phosphate as fatty acyl donor, but not acyl-CoA or acyl-ACP. The chain is Glycerol-3-phosphate acyltransferase from Chromohalobacter salexigens (strain ATCC BAA-138 / DSM 3043 / CIP 106854 / NCIMB 13768 / 1H11).